The following is a 598-amino-acid chain: Aspartate--tRNA(Asp/Asn) ligase (598 aa).

E173 is a binding site for L-aspartate. An aspartate region spans residues 197–200 (QLFK). R219 provides a ligand contact to L-aspartate. Residues 219–221 (RDE) and Q228 contribute to the ATP site. L-aspartate is bound at residue H448. Position 482 (E482) interacts with ATP. An L-aspartate-binding site is contributed by R489. ATP is bound at residue 534–537 (GWDR). The segment at 560–598 (GYDPLTAAPAPITAQQRKEAGVDAKPETKKAAAGEPAGA) is disordered. The segment covering 575–591 (QRKEAGVDAKPETKKAA) has biased composition (basic and acidic residues).

It belongs to the class-II aminoacyl-tRNA synthetase family. Type 1 subfamily. As to quaternary structure, homodimer.

Its subcellular location is the cytoplasm. It carries out the reaction tRNA(Asx) + L-aspartate + ATP = L-aspartyl-tRNA(Asx) + AMP + diphosphate. In terms of biological role, aspartyl-tRNA synthetase with relaxed tRNA specificity since it is able to aspartylate not only its cognate tRNA(Asp) but also tRNA(Asn). Reaction proceeds in two steps: L-aspartate is first activated by ATP to form Asp-AMP and then transferred to the acceptor end of tRNA(Asp/Asn). This is Aspartate--tRNA(Asp/Asn) ligase from Kineococcus radiotolerans (strain ATCC BAA-149 / DSM 14245 / SRS30216).